We begin with the raw amino-acid sequence, 208 residues long: Protein-L-isoaspartate O-methyltransferase (208 aa).

The active site involves Ser59.

The protein belongs to the methyltransferase superfamily. L-isoaspartyl/D-aspartyl protein methyltransferase family.

It is found in the cytoplasm. The catalysed reaction is [protein]-L-isoaspartate + S-adenosyl-L-methionine = [protein]-L-isoaspartate alpha-methyl ester + S-adenosyl-L-homocysteine. Functionally, catalyzes the methyl esterification of L-isoaspartyl residues in peptides and proteins that result from spontaneous decomposition of normal L-aspartyl and L-asparaginyl residues. It plays a role in the repair and/or degradation of damaged proteins. In Aliivibrio salmonicida (strain LFI1238) (Vibrio salmonicida (strain LFI1238)), this protein is Protein-L-isoaspartate O-methyltransferase.